Here is a 235-residue protein sequence, read N- to C-terminus: MKYVFYLGVLAGTFFFADSSVQKEDPAPYLVYLKSHFNPCVGVLIKPSWVLAPAHCYLPNLKVMLGNFKSRVRDGTEQTINPIQIVRYWNYSHSAPQDDLMLIKLAKPAMLNPKVQPLTLATTNVRPGTVCLLSGLDWSQENSGRHPDLRQNLEAPVMSDRECQKTEQGKSHRNSLCVKFVKVFSRIFGEVAVATVICKDKLQGIEVGHFMGGDVGIYTNVYKYVSWIENTAKDK.

Positions Met-1 to Ser-19 are cleaved as a signal peptide. One can recognise a Peptidase S1 domain in the interval Ser-20–Lys-233. 3 disulfide bridges follow: Cys-40–Cys-56, Cys-131–Cys-198, and Cys-163–Cys-177.

It belongs to the peptidase S1 family. As to expression, testis-specific. Expressed in spermatids (at protein level).

It localises to the cytoplasmic vesicle. The protein resides in the secretory vesicle. Its subcellular location is the acrosome. The protein localises to the secreted. Functionally, plays a role in male fertility. May have a role in sperm migration or binding to zona-intact eggs. Involved in the activation of the proacrosin/acrosin system. The sequence is that of Probable inactive serine protease 37 from Homo sapiens (Human).